Here is a 287-residue protein sequence, read N- to C-terminus: F-actin-capping protein subunit beta (287 aa).

The residue at position 2 (Ser2) is an N-acetylserine. A phosphoserine mark is found at Ser85 and Ser92.

It belongs to the F-actin-capping protein beta subunit family. As to quaternary structure, component of the F-actin capping complex, composed of a heterodimer of an alpha and a beta subunit. Interacts with BSP1 (via C-terminus); leading to recruitment of the F-actin capping complex to actin cortical patches and the acomyosin contractile ring.

Its subcellular location is the cytoplasm. The protein resides in the cytoskeleton. It is found in the actin patch. It localises to the bud. The protein localises to the bud tip. Functionally, F-actin-capping proteins bind in a Ca(2+)-independent manner to the fast growing ends of actin filaments (barbed end) thereby blocking the exchange of subunits at these ends. Unlike other capping proteins (such as gelsolin and severin), these proteins do not sever actin filaments. The polypeptide is F-actin-capping protein subunit beta (CAP2) (Saccharomyces cerevisiae (strain ATCC 204508 / S288c) (Baker's yeast)).